The chain runs to 871 residues: Tegument protein UL47 homolog (871 aa).

A disordered region spans residues 1-212 (MDQHHGARGG…DEDDMEVIRD (212 aa)). Positions 13–33 (IRRPRRSIESRSHPFRATGNT) match the Nuclear localization signal motif. Composition is skewed to polar residues over residues 30–41 (TGNTQRTYSTPR) and 59–81 (EQASNQDESSNPSTSNAQQSTSF). 3 stretches are compositionally biased toward acidic residues: residues 114–134 (SSSEEEEEEGPAQAPLDEEDQ), 146–155 (SSDENDEEED), and 185–207 (SESETDIDAEEEEEDDEDDEDDM).

This sequence belongs to the alphaherpesvirinae HHV-1 UL47 family. As to quaternary structure, interacts with US3 kinase. Interacts with UL31 and UL34; these interactions seem important for efficient virion nuclear egress. Interacts with UL41/VHS. In terms of processing, phosphorylated by US3. This phosphorylation is required for proper nuclear localization.

Its subcellular location is the virion tegument. The protein resides in the host nucleus. It localises to the host cytoplasm. In terms of biological role, tegument protein that can bind to various RNA transcripts. Plays a role in the attenuation of selective viral and cellular mRNA degradation by modulating the activity of host shutoff RNase UL41/VHS. Also plays a role in the primary envelopment of virions in the perinuclear space, probably by interacting with two nuclear egress proteins UL31 and UL34. This Equine herpesvirus 1 (strain V592) (EHV-1) protein is Tegument protein UL47 homolog.